The primary structure comprises 252 residues: Geranylgeranylglyceryl phosphate synthase (252 aa).

Positions 26 and 55 each coordinate Mg(2+). Residues 174–180 (YLEAGSG), 205–206 (GG), and 227–228 (GT) contribute to the sn-glycerol 1-phosphate site.

Belongs to the GGGP/HepGP synthase family. Group II subfamily. Mg(2+) is required as a cofactor.

The protein localises to the cytoplasm. The catalysed reaction is sn-glycerol 1-phosphate + (2E,6E,10E)-geranylgeranyl diphosphate = sn-3-O-(geranylgeranyl)glycerol 1-phosphate + diphosphate. It functions in the pathway membrane lipid metabolism; glycerophospholipid metabolism. Its function is as follows. Prenyltransferase that catalyzes the transfer of the geranylgeranyl moiety of geranylgeranyl diphosphate (GGPP) to the C3 hydroxyl of sn-glycerol-1-phosphate (G1P). This reaction is the first ether-bond-formation step in the biosynthesis of archaeal membrane lipids. In Thermococcus gammatolerans (strain DSM 15229 / JCM 11827 / EJ3), this protein is Geranylgeranylglyceryl phosphate synthase.